A 446-amino-acid chain; its full sequence is Glycerol-3-phosphate acyltransferase 3 (446 aa).

Transmembrane regions (helical) follow at residues 25-45 (LPSALGVSLGISEAYMWVLVK), 142-162 (LRLTVVWVIGVIVRYCFLLPL), and 164-184 (FTLAAIGITSMIVGTTVVGQL). An HXXXXD motif motif is present at residues 232–237 (HTSPID). The chain crosses the membrane as a helical span at residues 352 to 372 (IVSYLLRIMTSWAIVCHVWYM). Positions 418 to 446 (FKEEQQKNYSKMLVRNGSQGNLPAGTESD) are disordered.

This sequence belongs to the 1-acyl-sn-glycerol-3-phosphate acyltransferase family.

It localises to the endoplasmic reticulum membrane. It catalyses the reaction sn-glycerol 3-phosphate + an acyl-CoA = a 1-acyl-sn-glycero-3-phosphate + CoA. The catalysed reaction is a 1-acyl-sn-glycero-3-phosphate + an acyl-CoA = a 1,2-diacyl-sn-glycero-3-phosphate + CoA. It carries out the reaction dodecanoyl-CoA + sn-glycerol 3-phosphate = 1-dodecanoyl-sn-glycerol 3-phosphate + CoA. The enzyme catalyses sn-glycerol 3-phosphate + hexadecanoyl-CoA = 1-hexadecanoyl-sn-glycero-3-phosphate + CoA. It catalyses the reaction sn-glycerol 3-phosphate + (9Z)-octadecenoyl-CoA = 1-(9Z-octadecenoyl)-sn-glycero-3-phosphate + CoA. The catalysed reaction is (9Z,12Z)-octadecadienoyl-CoA + sn-glycerol 3-phosphate = 1-(9Z,12Z)-octadecadienoyl-sn-glycero-3-phosphate + CoA. It carries out the reaction 1-tetradecanoyl-sn-glycerol 3-phosphate + (9Z)-octadecenoyl-CoA = 1-tetradecanoyl-2-(9Z)-octadecenoyl-sn-glycero-3-phosphate + CoA. The enzyme catalyses 1-hexadecanoyl-sn-glycero-3-phosphate + (9Z)-octadecenoyl-CoA = 1-hexadecanoyl-2-(9Z-octadecenoyl)-sn-glycero-3-phosphate + CoA. It catalyses the reaction 1-(9Z-octadecenoyl)-sn-glycero-3-phosphate + (9Z)-octadecenoyl-CoA = 1,2-di-(9Z-octadecenoyl)-sn-glycero-3-phosphate + CoA. The catalysed reaction is 1-(6Z,9Z,12Z-octadecatrienoyl)-sn-glycero-3-phosphate + (9Z)-octadecenoyl-CoA = (6Z,9Z,12Z)-octadecatrienoyl-2-(9Z)-octadecenoyl-sn-glycero-3-phosphate + CoA. It carries out the reaction 1-(9Z,12Z,15Z)-octadecatrienoyl-sn-glycero-3-phosphate + (9Z)-octadecenoyl-CoA = 1-(9Z,12Z,15Z)-octadecatrienoyl-2-(9Z)-octadecenoyl-sn-glycero-3-phosphate + CoA. The enzyme catalyses 1-(9Z-octadecenoyl)-sn-glycero-3-phosphate + tetradecanoyl-CoA = 1-(9Z)-octadecenoyl-2-tetradecanoyl-sn-glycero-3-phosphate + CoA. It catalyses the reaction 1-(9Z-octadecenoyl)-sn-glycero-3-phosphate + hexadecanoyl-CoA = 1-(9Z)-octadecenoyl-2-hexadecanoyl-sn-glycero-3-phosphate + CoA. The catalysed reaction is 1-(9Z-octadecenoyl)-sn-glycero-3-phosphate + octadecanoyl-CoA = 1-(9Z-octadecenoyl)-2-octadecanoyl-sn-glycero-3-phosphate + CoA. It carries out the reaction 1-(9Z-octadecenoyl)-sn-glycero-3-phosphate + (9Z,12Z)-octadecadienoyl-CoA = 1-(9Z)-octadecenoyl-2-(9Z,12Z)-octadecadienoyl-sn-glycero-3-phosphate + CoA. The enzyme catalyses 1-(5Z,8Z,11Z,14Z-eicosatetraenoyl)-sn-glycero-3-phosphate + (9Z)-octadecenoyl-CoA = 1-(5Z,8Z,11Z,14Z)-eicosatetraenoyl-2-(9Z)-octadecenoyl-sn-glycero-3-phosphate + CoA. The protein operates within glycerolipid metabolism; triacylglycerol biosynthesis. It participates in phospholipid metabolism; CDP-diacylglycerol biosynthesis; CDP-diacylglycerol from sn-glycerol 3-phosphate: step 1/3. Converts glycerol-3-phosphate to 1-acyl-sn-glycerol-3-phosphate (lysophosphatidic acid or LPA) by incorporating an acyl moiety at the sn-1 position of the glycerol backbone. Also converts LPA into 1,2-diacyl-sn-glycerol-3-phosphate (phosphatidic acid or PA) by incorporating an acyl moiety at the sn-2 position of the glycerol backbone. Protects cells against lipotoxicity. The chain is Glycerol-3-phosphate acyltransferase 3 from Gallus gallus (Chicken).